The primary structure comprises 483 residues: NADPH:adrenodoxin oxidoreductase, mitochondrial (483 aa).

The N-terminal 14 residues, 1–14, are a transit peptide targeting the mitochondrion; that stretch reads MSRYLARYMVSRYF. FAD is bound by residues alanine 32, aspartate 53, leucine 61, and leucine 97. NADP(+) is bound by residues 169–172, 213–214, and glutamate 225; these read QGNV and RR. Residues tryptophan 391 and 398 to 400 contribute to the FAD site; that span reads GII. Residue glycine 398 coordinates NADP(+).

Belongs to the ferredoxin--NADP reductase type 1 family. It depends on FAD as a cofactor.

Its subcellular location is the mitochondrion. The enzyme catalyses 2 reduced [adrenodoxin] + NADP(+) + H(+) = 2 oxidized [adrenodoxin] + NADPH. Associates in vitro with the adrenodoxin-like protein MFDX1 to form an efficient low potential electron transfer chain that is able to reduce cytochrome C. Functions as accessory mitochondrial protein involved with BIO2 in the plant biotin synthase reaction. The sequence is that of NADPH:adrenodoxin oxidoreductase, mitochondrial from Arabidopsis thaliana (Mouse-ear cress).